Here is a 312-residue protein sequence, read N- to C-terminus: ADIPOR-like receptor IZH4 (312 aa).

Residues methionine 1–glutamate 38 are disordered. The Cytoplasmic portion of the chain corresponds to methionine 1–serine 64. Residues threonine 16 to glutamate 38 are compositionally biased toward basic and acidic residues. The chain crosses the membrane as a helical span at residues leucine 65 to threonine 85. At aspartate 86 to aspartate 101 the chain is on the lumenal side. A helical transmembrane segment spans residues tyrosine 102–tyrosine 122. At histidine 123–serine 141 the chain is on the cytoplasmic side. The helical transmembrane segment at tyrosine 142–tyrosine 162 threads the bilayer. Residues aspartate 163–valine 165 lie on the Lumenal side of the membrane. Residues phenylalanine 166–isoleucine 186 traverse the membrane as a helical segment. Over leucine 187 to valine 201 the chain is Cytoplasmic. The chain crosses the membrane as a helical span at residues phenylalanine 202 to phenylalanine 222. The Lumenal segment spans residues aspartate 223–arginine 231. The chain crosses the membrane as a helical span at residues isoleucine 232–valine 252. Residues threonine 253–histidine 277 are Cytoplasmic-facing. Residues leucine 278–methionine 298 form a helical membrane-spanning segment. The Lumenal portion of the chain corresponds to histidine 299 to serine 312.

The protein belongs to the ADIPOR family.

The protein resides in the endoplasmic reticulum membrane. Its function is as follows. ADIPOR-like receptor involved in zinc metabolism either by altering membrane sterol content or by directly altering cellular zinc levels. The sequence is that of ADIPOR-like receptor IZH4 (IZH4) from Saccharomyces cerevisiae (strain ATCC 204508 / S288c) (Baker's yeast).